A 388-amino-acid polypeptide reads, in one-letter code: Succinate--CoA ligase [ADP-forming] subunit beta (388 aa).

Positions 9 to 244 constitute an ATP-grasp domain; it reads KKLFAEYGLP…PSQDDPREAH (236 aa). Residues lysine 46, 53–55, glutamate 99, threonine 102, and glutamate 107 each bind ATP; that span reads GRG. Mg(2+) is bound by residues asparagine 199 and aspartate 213. Substrate contacts are provided by residues asparagine 264 and 321–323; that span reads GIV.

Belongs to the succinate/malate CoA ligase beta subunit family. In terms of assembly, heterotetramer of two alpha and two beta subunits. It depends on Mg(2+) as a cofactor.

The enzyme catalyses succinate + ATP + CoA = succinyl-CoA + ADP + phosphate. The catalysed reaction is GTP + succinate + CoA = succinyl-CoA + GDP + phosphate. It functions in the pathway carbohydrate metabolism; tricarboxylic acid cycle; succinate from succinyl-CoA (ligase route): step 1/1. Functionally, succinyl-CoA synthetase functions in the citric acid cycle (TCA), coupling the hydrolysis of succinyl-CoA to the synthesis of either ATP or GTP and thus represents the only step of substrate-level phosphorylation in the TCA. The beta subunit provides nucleotide specificity of the enzyme and binds the substrate succinate, while the binding sites for coenzyme A and phosphate are found in the alpha subunit. This is Succinate--CoA ligase [ADP-forming] subunit beta from Aeromonas salmonicida (strain A449).